The chain runs to 207 residues: Uridine kinase (207 aa).

Residue 13 to 20 (GASGSGKT) participates in ATP binding.

Belongs to the uridine kinase family.

It is found in the cytoplasm. It carries out the reaction uridine + ATP = UMP + ADP + H(+). The catalysed reaction is cytidine + ATP = CMP + ADP + H(+). It participates in pyrimidine metabolism; CTP biosynthesis via salvage pathway; CTP from cytidine: step 1/3. Its pathway is pyrimidine metabolism; UMP biosynthesis via salvage pathway; UMP from uridine: step 1/1. This Ureaplasma urealyticum serovar 10 (strain ATCC 33699 / Western) protein is Uridine kinase.